Here is a 424-residue protein sequence, read N- to C-terminus: MLDLVAAFIALTTLLTYVNYRFIRLPPTIGVMATALVFSLIVQGLSELGYPILEVEMQEIIRRIDFSEVLMTWFLPALLFAGALHVDLSDLRSYKWPIGLLATAGVLIATFVIGGLAYYTFPLFGWQVDFIYCLLFGALISPTDPIAVLGILKSAGAPKPLATTIVGESLFNDGTAVVVFAIILGILQLGEAPTVSATAILFVQEAIGGVVFGAVLGYGVFVMMRGIDQYQVEVMLTLALVIGGAALAARLHVSAPIAMVVAGLIIGNHGRHYAMSDETRRYVDKFWELIDEILNALLFALIGLELLLLPFSWLHVAAAFALGGAVLVSRLLTVGPAILVLRRFRGANRQVPAGTIRILVWGGLRGGVSVALALSLPLGPERDLILSLTYIVVLVSILLQGLSIGPLVRRIYAGQPLEKSEGAH.

Transmembrane regions (helical) follow at residues 3–23 (DLVA…YRFI), 25–45 (LPPT…VQGL), 66–86 (FSEV…ALHV), 96–116 (WPIG…IGGL), 130–152 (FIYC…LGIL), 170–190 (LFND…LQLG), 200–220 (ILFV…GYGV), 246–266 (ALAA…GLII), 296–316 (ALLF…WLHV), 320–340 (FALG…AILV), 358–378 (ILVW…SLPL), and 384–404 (LILS…GLSI).

It belongs to the monovalent cation:proton antiporter 1 (CPA1) transporter (TC 2.A.36) family.

It localises to the cell inner membrane. Inhibited by amiloride. Functionally, na(+)/H(+) antiporter that extrudes sodium in exchange for external protons. Also has weak Li(+)/H(+) antiport activity. The chain is Na(+)/H(+) antiporter NhaP (nhaP) from Pseudomonas aeruginosa (strain ATCC 15692 / DSM 22644 / CIP 104116 / JCM 14847 / LMG 12228 / 1C / PRS 101 / PAO1).